The chain runs to 95 residues: FMRFamide-like neuropeptides 16 (95 aa).

An N-terminal signal peptide occupies residues 1–24 (MSLSGFEFSSIIAVLLLLIQLSSA). Positions 25–58 (AVLPVDYASQYGVASADEMTALPEEGSLFAERPA) are excised as a propeptide. A phenylalanine amide mark is found at phenylalanine 67, phenylalanine 77, and phenylalanine 87. Residues 90-95 (SAPFEQ) constitute a propeptide that is removed on maturation.

The protein belongs to the FARP (FMRFamide related peptide) family.

It is found in the secreted. Functionally, FMRFamides and FMRFamide-like peptides are neuropeptides. AQTFVRF-amide inhibits the activity of dissected pharyngeal myogenic muscle system. The sequence is that of FMRFamide-like neuropeptides 16 (flp-16) from Caenorhabditis briggsae.